Reading from the N-terminus, the 101-residue chain is uncharacterized protein (101 aa).

Positions 1 to 23 (MERRTGVVLIIFVTFCEAMMARA) are cleaved as a signal peptide. The helical transmembrane segment at 38 to 58 (FLLFIIHTSCTMVAFIIGNLA) threads the bilayer.

It is found in the host membrane. This is an uncharacterized protein from Cryphonectria parasitica (Chestnut blight fungus).